The chain runs to 69 residues: Putative membrane protein insertion efficiency factor (69 aa).

It belongs to the UPF0161 family.

Its subcellular location is the cell membrane. Functionally, could be involved in insertion of integral membrane proteins into the membrane. This Clostridium perfringens (strain SM101 / Type A) protein is Putative membrane protein insertion efficiency factor.